A 428-amino-acid chain; its full sequence is Gamma-glutamyl phosphate reductase (428 aa).

The protein belongs to the gamma-glutamyl phosphate reductase family.

The protein resides in the cytoplasm. The enzyme catalyses L-glutamate 5-semialdehyde + phosphate + NADP(+) = L-glutamyl 5-phosphate + NADPH + H(+). Its pathway is amino-acid biosynthesis; L-proline biosynthesis; L-glutamate 5-semialdehyde from L-glutamate: step 2/2. Catalyzes the NADPH-dependent reduction of L-glutamate 5-phosphate into L-glutamate 5-semialdehyde and phosphate. The product spontaneously undergoes cyclization to form 1-pyrroline-5-carboxylate. This is Gamma-glutamyl phosphate reductase from Treponema pallidum (strain Nichols).